The primary structure comprises 482 residues: Sensor histidine kinase CusS (482 aa).

Residues 1–15 (MVSKPFQRPFSLATR) lie on the Cytoplasmic side of the membrane. Residues 16–36 (LTFFISLATIAAFFAFAWIMI) traverse the membrane as a helical segment. The Periplasmic segment spans residues 37 to 186 (HSVKVHFAEQ…LHYINDLMNK (150 aa)). Residues 187–207 (LIMTASVISILIVFIVLLAVH) traverse the membrane as a helical segment. The 54-residue stretch at 207-260 (HKGHAPIRSVSRQIQNITSKDLDVRLDPQTVPIELEQLVLSFNHMIERIEDVFT) folds into the HAMP domain. At 208-482 (KGHAPIRSVS…RFVIVLPERG (275 aa)) the chain is on the cytoplasmic side. Residues 268–482 (DIAHEIRTPI…RFVIVLPERG (215 aa)) form the Histidine kinase domain. His-271 carries the post-translational modification Phosphohistidine; by autocatalysis.

In terms of processing, autophosphorylated.

The protein localises to the cell inner membrane. It carries out the reaction ATP + protein L-histidine = ADP + protein N-phospho-L-histidine.. Member of the two-component regulatory system CusS/CusR involved in response to copper and silver. Acts as a copper/silver ion sensor. Activates CusR by phosphorylation. The sequence is that of Sensor histidine kinase CusS (cusS) from Escherichia coli O157:H7.